Consider the following 130-residue polypeptide: Follitropin subunit beta (130 aa).

The first 20 residues, 1–20 (MMKSIQLCILLWCLRAVCCH), serve as a signal peptide directing secretion. Disulfide bonds link C22-C70, C36-C85, C39-C123, C47-C101, C51-C103, and C106-C113. N-linked (GlcNAc...) asparagine glycosylation is found at N26 and N43.

It belongs to the glycoprotein hormones subunit beta family. As to quaternary structure, heterodimer. The active follitropin is a heterodimer composed of an alpha chain/CGA shared with other hormones and a unique beta chain/FSHB shown here.

Its subcellular location is the secreted. Functionally, together with the alpha chain CGA constitutes follitropin, the follicle-stimulating hormone, and provides its biological specificity to the hormone heterodimer. Binds FSHR, a G protein-coupled receptor, on target cells to activate downstream signaling pathways. Follitropin is involved in follicle development and spermatogenesis in reproductive organs. The polypeptide is Follitropin subunit beta (Fshb) (Rattus norvegicus (Rat)).